The sequence spans 284 residues: D-tagatose-1,6-bisphosphate aldolase subunit GatY (284 aa).

The active-site Proton donor is Asp-82. Zn(2+) is bound by residues His-83 and His-180. Gly-181 is a dihydroxyacetone phosphate binding site. His-208 contributes to the Zn(2+) binding site. Residues 209–211 and 230–233 contribute to the dihydroxyacetone phosphate site; these read GAS and NVAT.

This sequence belongs to the class II fructose-bisphosphate aldolase family. TagBP aldolase GatY subfamily. Forms a complex with GatZ. Requires Zn(2+) as cofactor.

It carries out the reaction D-tagatofuranose 1,6-bisphosphate = D-glyceraldehyde 3-phosphate + dihydroxyacetone phosphate. It participates in carbohydrate metabolism; D-tagatose 6-phosphate degradation; D-glyceraldehyde 3-phosphate and glycerone phosphate from D-tagatose 6-phosphate: step 2/2. Functionally, catalytic subunit of the tagatose-1,6-bisphosphate aldolase GatYZ, which catalyzes the reversible aldol condensation of dihydroxyacetone phosphate (DHAP or glycerone-phosphate) with glyceraldehyde 3-phosphate (G3P) to produce tagatose 1,6-bisphosphate (TBP). Requires GatZ subunit for full activity and stability. Is involved in the catabolism of galactitol. The protein is D-tagatose-1,6-bisphosphate aldolase subunit GatY of Shigella boydii serotype 4 (strain Sb227).